Here is a 397-residue protein sequence, read N- to C-terminus: Oxygen-dependent coproporphyrinogen-III oxidase, chloroplastic (397 aa).

Residues 76–95 are disordered; it reads ESDMGSNVTSNSSSVRGRFE. Polar residues predominate over residues 79 to 90; sequence MGSNVTSNSSSV. The tract at residues 135-144 is important for dimerization; it reads VLQDGAVFEK. Ser-185 provides a ligand contact to substrate. His-199 acts as the Proton donor in catalysis. Residues 201–203 and 355–360 contribute to the substrate site; these read NYR and GGRIES. An important for dimerization region spans residues 337 to 372; the sequence is YVEFNLVYDRGTTFGLKTGGRIESILVSLPLTARWE.

The protein belongs to the aerobic coproporphyrinogen-III oxidase family. Homodimer.

It is found in the plastid. The protein resides in the chloroplast. The catalysed reaction is coproporphyrinogen III + O2 + 2 H(+) = protoporphyrinogen IX + 2 CO2 + 2 H2O. It functions in the pathway porphyrin-containing compound metabolism; protoporphyrin-IX biosynthesis; protoporphyrinogen-IX from coproporphyrinogen-III (O2 route): step 1/1. In terms of biological role, involved in the heme and chlorophyll biosynthesis. Catalyzes the aerobic oxidative decarboxylation of propionate groups of rings A and B of coproporphyrinogen-III to yield the vinyl groups in protoporphyrinogen-IX. This Nicotiana tabacum (Common tobacco) protein is Oxygen-dependent coproporphyrinogen-III oxidase, chloroplastic (CPX).